We begin with the raw amino-acid sequence, 763 residues long: Phosphoglycerol transferase I (763 aa).

A run of 4 helical transmembrane segments spans residues 4 to 19 (LLSF…IYAW), 26 to 48 (WWFA…LFAS), 76 to 98 (YILP…GWIL), and 105 to 127 (PHHF…ASPA).

This sequence belongs to the OpgB family.

It localises to the cell inner membrane. The catalysed reaction is a phosphatidylglycerol + a membrane-derived-oligosaccharide D-glucose = a 1,2-diacyl-sn-glycerol + a membrane-derived-oligosaccharide 6-(glycerophospho)-D-glucose.. The protein operates within glycan metabolism; osmoregulated periplasmic glucan (OPG) biosynthesis. In terms of biological role, transfers a phosphoglycerol residue from phosphatidylglycerol to the membrane-bound nascent glucan backbones. The polypeptide is Phosphoglycerol transferase I (Shigella flexneri).